The following is a 474-amino-acid chain: MTIFERSKKGRKAFRLPESDIPEYSLPNRFLRRTPPELPEVSEPDVVRHYTDLARKNYSVDRGIYPLGSCTMKYNPKLNEKVANLEGFREIHPYQPAETVQGSLRLMYELKEMLCEITGMDDMTLQPAAGAHGELTGMLIVREYFKSRGDTGRKKVLVPDSAHGTNPASASMVGFEVVEIKSKNGMVDVEDLKKLLDEEVAAVMLTNPNTLGLFEKDILKIAEMTHECGALLYYDGANLNAVMGKVRPGDMGFDIVHLNLHKTFSTPHGMGGPGSGPVGVKKHLVDFLPFPQVRKNGELYELFVPEKTIGRVRSFFGNFPVLVKAYTYILTMGRDGLERVSEMAVLNANYLKKKIEKFLEIPYNGFCMHEFVASAEKVFRETGVRTLDIAKRILDFGVHPPTVYFPLIVLEALMIEPTETENKETLDKYAEILERVVKEAYENPDVLKNAPHNTPVRRVDEVLASKKPVFRWRG.

Lys262 is modified (N6-(pyridoxal phosphate)lysine).

Belongs to the GcvP family. C-terminal subunit subfamily. The glycine cleavage system is composed of four proteins: P, T, L and H. In this organism, the P 'protein' is a heterodimer of two subunits. It depends on pyridoxal 5'-phosphate as a cofactor.

The enzyme catalyses N(6)-[(R)-lipoyl]-L-lysyl-[glycine-cleavage complex H protein] + glycine + H(+) = N(6)-[(R)-S(8)-aminomethyldihydrolipoyl]-L-lysyl-[glycine-cleavage complex H protein] + CO2. In terms of biological role, the glycine cleavage system catalyzes the degradation of glycine. The P protein binds the alpha-amino group of glycine through its pyridoxal phosphate cofactor; CO(2) is released and the remaining methylamine moiety is then transferred to the lipoamide cofactor of the H protein. In Thermotoga petrophila (strain ATCC BAA-488 / DSM 13995 / JCM 10881 / RKU-1), this protein is Probable glycine dehydrogenase (decarboxylating) subunit 2.